Reading from the N-terminus, the 186-residue chain is Alkyl hydroperoxide reductase AhpD (186 aa).

Catalysis depends on Cys132, which acts as the Proton donor. An intrachain disulfide couples Cys132 to Cys135. The active-site Cysteine sulfenic acid (-SOH) intermediate is the Cys135.

It belongs to the AhpD family.

The catalysed reaction is N(6)-[(R)-dihydrolipoyl]-L-lysyl-[lipoyl-carrier protein] + a hydroperoxide = N(6)-[(R)-lipoyl]-L-lysyl-[lipoyl-carrier protein] + an alcohol + H2O. Its function is as follows. Antioxidant protein with alkyl hydroperoxidase activity. Required for the reduction of the AhpC active site cysteine residues and for the regeneration of the AhpC enzyme activity. The protein is Alkyl hydroperoxide reductase AhpD of Anaeromyxobacter dehalogenans (strain 2CP-1 / ATCC BAA-258).